Here is a 695-residue protein sequence, read N- to C-terminus: DNA ligase (695 aa).

Residues 36 to 40 (DADYD), 85 to 86 (SL), and glutamate 123 contribute to the NAD(+) site. Lysine 125 functions as the N6-AMP-lysine intermediate in the catalytic mechanism. Residues arginine 146, glutamate 182, lysine 318, and lysine 342 each contribute to the NAD(+) site. The Zn(2+) site is built by cysteine 436, cysteine 439, cysteine 454, and cysteine 460. The 79-residue stretch at 617–695 (LQSGDLAGKT…EDGLKALLSQ (79 aa)) folds into the BRCT domain.

The protein belongs to the NAD-dependent DNA ligase family. LigA subfamily. Mg(2+) is required as a cofactor. Requires Mn(2+) as cofactor.

The catalysed reaction is NAD(+) + (deoxyribonucleotide)n-3'-hydroxyl + 5'-phospho-(deoxyribonucleotide)m = (deoxyribonucleotide)n+m + AMP + beta-nicotinamide D-nucleotide.. Functionally, DNA ligase that catalyzes the formation of phosphodiester linkages between 5'-phosphoryl and 3'-hydroxyl groups in double-stranded DNA using NAD as a coenzyme and as the energy source for the reaction. It is essential for DNA replication and repair of damaged DNA. The polypeptide is DNA ligase (Bordetella avium (strain 197N)).